The primary structure comprises 523 residues: tRNA-2-methylthio-N(6)-dimethylallyladenosine synthase (523 aa).

A disordered region spans residues 1 to 26 (MNEKQRLEQTGQIQTASHPADRKSDL). Over residues 8–17 (EQTGQIQTAS) the composition is skewed to polar residues. Positions 80–198 (RKFYIRTYGC…LPYILHEAYM (119 aa)) constitute an MTTase N-terminal domain. Residues Cys89, Cys125, Cys159, Cys235, Cys239, and Cys242 each contribute to the [4Fe-4S] cluster site. Positions 221–451 (RKGNIKAWVN…NALVQEIAAK (231 aa)) constitute a Radical SAM core domain. Residues 454 to 517 (KQYEGQVVEV…TWTLTGELAN (64 aa)) form the TRAM domain.

The protein belongs to the methylthiotransferase family. MiaB subfamily. As to quaternary structure, monomer. [4Fe-4S] cluster is required as a cofactor.

Its subcellular location is the cytoplasm. The catalysed reaction is N(6)-dimethylallyladenosine(37) in tRNA + (sulfur carrier)-SH + AH2 + 2 S-adenosyl-L-methionine = 2-methylsulfanyl-N(6)-dimethylallyladenosine(37) in tRNA + (sulfur carrier)-H + 5'-deoxyadenosine + L-methionine + A + S-adenosyl-L-homocysteine + 2 H(+). In terms of biological role, catalyzes the methylthiolation of N6-(dimethylallyl)adenosine (i(6)A), leading to the formation of 2-methylthio-N6-(dimethylallyl)adenosine (ms(2)i(6)A) at position 37 in tRNAs that read codons beginning with uridine. The polypeptide is tRNA-2-methylthio-N(6)-dimethylallyladenosine synthase (Geobacillus thermodenitrificans (strain NG80-2)).